Here is a 373-residue protein sequence, read N- to C-terminus: 3-dehydroquinate synthase (373 aa).

Residues 67–72 (EGEETK), 101–105 (GVILD), 125–126 (TT), lysine 138, and lysine 147 each bind NAD(+). Residues glutamate 180, histidine 240, and histidine 256 each coordinate Zn(2+).

This sequence belongs to the sugar phosphate cyclases superfamily. Dehydroquinate synthase family. NAD(+) is required as a cofactor. It depends on Co(2+) as a cofactor. The cofactor is Zn(2+).

It is found in the cytoplasm. It catalyses the reaction 7-phospho-2-dehydro-3-deoxy-D-arabino-heptonate = 3-dehydroquinate + phosphate. It participates in metabolic intermediate biosynthesis; chorismate biosynthesis; chorismate from D-erythrose 4-phosphate and phosphoenolpyruvate: step 2/7. Its function is as follows. Catalyzes the conversion of 3-deoxy-D-arabino-heptulosonate 7-phosphate (DAHP) to dehydroquinate (DHQ). This chain is 3-dehydroquinate synthase, found in Chlamydia trachomatis serovar A (strain ATCC VR-571B / DSM 19440 / HAR-13).